A 421-amino-acid polypeptide reads, in one-letter code: Chitin deacetylase (421 aa).

The N-terminal stretch at Met-1 to Ala-21 is a signal peptide. Asn-39, Asn-70, Asn-87, and Asn-106 each carry an N-linked (GlcNAc...) asparagine glycan. Residues Glu-157–Cys-349 form the NodB homology domain. The Proton acceptor role is filled by Asp-164. An acetate-binding site is contributed by Asp-164. Asp-165 lines the Co(2+) pocket. Asn-168 carries an N-linked (GlcNAc...) asparagine glycan. Co(2+) is bound by residues His-214 and His-218. Tyr-255 contributes to the acetate binding site. Residue Asn-307 is glycosylated (N-linked (GlcNAc...) asparagine). The active-site Proton donor is the His-320. 3 N-linked (GlcNAc...) asparagine glycosylation sites follow: Asn-323, Asn-351, and Asn-367. Thr-390 is lipidated: GPI-anchor amidated threonine. Residues Ala-391–Phe-421 constitute a propeptide, removed in mature form.

The protein belongs to the polysaccharide deacetylase family. Co(2+) serves as cofactor.

The protein resides in the secreted. It localises to the cell wall. It is found in the cell membrane. It carries out the reaction [(1-&gt;4)-N-acetyl-beta-D-glucosaminyl](n) + n H2O = chitosan + n acetate. Functionally, hydrolyzes the N-acetamido groups of N-acetyl-D-glucosamine residues in chitin to form chitosan and acetate. The chain is Chitin deacetylase from Amylomyces rouxii (Filamentous fungus).